We begin with the raw amino-acid sequence, 259 residues long: Trans-4-hydroxycyclohexanecarboxylate dehydrogenase (259 aa).

11 residues coordinate NAD(+): Arg-20, Met-22, Asp-41, Asp-73, Val-74, Asn-100, Tyr-164, Lys-168, Val-197, Thr-199, and Thr-202. Tyr-164 serves as the catalytic Proton acceptor.

Belongs to the short-chain dehydrogenases/reductases (SDR) family. Homodimer. Homotetramer.

It carries out the reaction trans-4-hydroxycyclohexane-1-carboxylate + NAD(+) = 4-oxocyclohexane-1-carboxylate + NADH + H(+). With respect to regulation, strongly inhibited by N-bromosuccinimide. Not inhibited by sulfhydryl reagents, such as iodoacetic acid, iodoacetamide, N-ethylmaleimide and p-hydroxymercuribenzoic acid. Dehydrogenase involved in a cyclohexanecarboxylate (CHCA) degradation pathway. Catalyzes the NAD(+)-dependent dehydrogenation of trans-4-hydroxycyclohexanecarboxylate (trans-4-hydroxyCHCA) to form 4-oxocyclohexanecarboxylate (4-oxoCHCA). Is highly specific for the trans-4-hydroxy derivative and shows only weak activity with cis-4-hydroxyCHCA. Can also catalyze the reverse reaction (4-oxoCHCA reduction) with a higher catalytic efficiency. In the reverse reaction, is highly specific for 4-oxoCHCA and cannot use either the 2-oxo or the 3-oxo homolog as substrate. Cannot use NADP(+). This Sinomonas cyclohexanicum (Corynebacterium cyclohexanicum) protein is Trans-4-hydroxycyclohexanecarboxylate dehydrogenase.